The sequence spans 122 residues: MIQQESRLSVADNSGAKEVLVIRVLGGTGKRYASIGDKVVVTVKSAISSSNMKKGTVSKAVVVRTKKEVKRADGSYIRFSDNAAVLLNNNDEPRGTRIFGPVARELRDKQFMKIVSLAPEVL.

The protein belongs to the universal ribosomal protein uL14 family. As to quaternary structure, part of the 50S ribosomal subunit. Forms a cluster with proteins L3 and L19. In the 70S ribosome, L14 and L19 interact and together make contacts with the 16S rRNA in bridges B5 and B8.

Its function is as follows. Binds to 23S rRNA. Forms part of two intersubunit bridges in the 70S ribosome. The protein is Large ribosomal subunit protein uL14 of Cytophaga hutchinsonii (strain ATCC 33406 / DSM 1761 / CIP 103989 / NBRC 15051 / NCIMB 9469 / D465).